An 834-amino-acid polypeptide reads, in one-letter code: Periplasmic nitrate reductase (834 aa).

A signal peptide (tat-type signal) is located at residues 1–32 (MTEPKIDRRQLLKLEAAAIAAAAAGMPTVARA). One can recognise a 4Fe-4S Mo/W bis-MGD-type domain in the interval 44 to 100 (LKWDKAACRFCGTGCSVMVATKDNRVVATHGDIKAEVNRGLNCVKGYFLSKIMYGHD). Positions 51, 54, 58, and 86 each coordinate [4Fe-4S] cluster. Residues K88, Q155, N180, C184, 217 to 224 (WGSNMAEM), 248 to 252 (STFEH), 267 to 269 (QTD), M378, Q382, N488, 514 to 515 (SD), K537, D564, and 724 to 733 (TGRVVEHWHS) each bind Mo-bis(molybdopterin guanine dinucleotide). Substrate is bound at residue W800. Residues N808 and K825 each coordinate Mo-bis(molybdopterin guanine dinucleotide).

It belongs to the prokaryotic molybdopterin-containing oxidoreductase family. NasA/NapA/NarB subfamily. In terms of assembly, component of the periplasmic nitrate reductase NapAB complex composed of NapA and NapB. Requires [4Fe-4S] cluster as cofactor. Mo-bis(molybdopterin guanine dinucleotide) serves as cofactor. Predicted to be exported by the Tat system. The position of the signal peptide cleavage has not been experimentally proven.

It is found in the periplasm. The enzyme catalyses 2 Fe(II)-[cytochrome] + nitrate + 2 H(+) = 2 Fe(III)-[cytochrome] + nitrite + H2O. Functionally, catalytic subunit of the periplasmic nitrate reductase complex NapAB. Receives electrons from NapB and catalyzes the reduction of nitrate to nitrite. The polypeptide is Periplasmic nitrate reductase (Bradyrhizobium sp. (strain ORS 278)).